Here is a 406-residue protein sequence, read N- to C-terminus: MSAEREAAEAATVAAATEAGAETGTGAGEGAPSQPPTVEVASDPQPPPAPEASASASAPPLRCLVLTGFGGYDKVKLQSRPAVPPAPGPGQLTLRVRACGLNFADLMGRQGLYDRLPPLPVTPGMEGAGVVVAVGEGVGDRKAGDRVMVLNRSGMWQEEVTVPSAQTFLMPEAMTFEEAAALLVNYITAYMVLFDFGNLRPGHSVLVHMAAGGVGMAALQLCRTVENVTVFGTASASKHEVLKENGVTHPIDYHTTDYVDEIKKISPKGVDIVMDPLGGSDTAKGYHLLKPMGKVVTYGMANLLTGPKRNLMAMARTWWNQFSVTALQLLQANRAVCGFHLGYLDGEVELVNSVVTRLVALYNQGHIKPRIDSVWPFEKVADAMKQMQEKKNIGKVLLVPGPEKET.

A disordered region spans residues 1–57 (MSAEREAAEAATVAAATEAGAETGTGAGEGAPSQPPTVEVASDPQPPPAPEASASAS). At serine 2 the chain carries N-acetylserine. Serine 2 is subject to Phosphoserine. The span at 9–22 (EAATVAAATEAGAE) shows a compositional bias: low complexity. Residues serine 33 and serine 42 each carry the phosphoserine modification.

It belongs to the zinc-containing alcohol dehydrogenase family. Quinone oxidoreductase subfamily.

Its subcellular location is the cytoplasm. It is found in the mitochondrion outer membrane. Plays a part in calcium-regulated keratinocyte activation in epidermal repair mechanisms. Has no effect on cell proliferation. Possesses ATPase activity. Negatively regulates mitochondrial fusion in cooperation with mitofusin proteins (MFN1-2). The polypeptide is Synaptic vesicle membrane protein VAT-1 homolog (Vat1) (Mus musculus (Mouse)).